A 485-amino-acid chain; its full sequence is G2/mitotic-specific cyclin-A1 (485 aa).

Positions 1-24 (MRSALSLKPSNGNAAKSQAVNNKN) are disordered. Residues 8–24 (KPSNGNAAKSQAVNNKN) show a composition bias toward polar residues.

It belongs to the cyclin family. Cyclin AB subfamily. In terms of tissue distribution, expressed in the cell lineages ABarp, C and E as well as the NSM neuroblasts.

Its function is as follows. Involved in the control of the cell cycle after S phase. May bind to and activate cdk-1 and/or cdk-2 to promote cell cycle progression. Necessary for embryogenesis. This Caenorhabditis elegans protein is G2/mitotic-specific cyclin-A1 (cya-1).